Here is a 479-residue protein sequence, read N- to C-terminus: ATP-dependent RNA helicase DbpA (479 aa).

The short motif at 2–30 (SHFKNYQISHDILRALEGLGYTEPTKVQQ) is the Q motif element. Residues 33-203 (IPAALERKDL…RQYMQNPEHI (171 aa)) form the Helicase ATP-binding domain. 46-53 (SQTGSGKT) lines the ATP pocket. Residues 151–154 (DEAD) carry the DEAD box motif. Positions 214–374 (NIEHAVIQVR…KIEAPSQEEV (161 aa)) constitute a Helicase C-terminal domain. The involved in 23S rRNA binding stretch occupies residues 404 to 479 (MKLYFNGGKK…KQLKVNKANK (76 aa)).

The protein belongs to the DEAD box helicase family. DbpA subfamily. In terms of assembly, may interact with RNA helicases CshA and CshB.

The protein localises to the cytoplasm. The catalysed reaction is ATP + H2O = ADP + phosphate + H(+). ATPase activity is stimulated by interaction with RNA. Functionally, DEAD-box RNA helicase involved in the assembly of the 50S ribosomal subunit. Has an RNA-dependent ATPase activity, which is specific for 23S rRNA, and a 3' to 5' RNA helicase activity that uses the energy of ATP hydrolysis to destabilize and unwind short rRNA duplexes. This Bacillus subtilis (strain 168) protein is ATP-dependent RNA helicase DbpA.